The sequence spans 70 residues: Conotoxin ba3a (70 aa).

Residues 1 to 20 form the signal peptide; it reads MLKIGVMLSIILVLFPLATL. The propeptide occupies 21–55; that stretch reads QLVAERPAAERYAENKQDLNPDERRNYLVDLGVER.

As to expression, expressed by the venom duct.

It localises to the secreted. This chain is Conotoxin ba3a, found in Conus bayani (Bayan's cone).